The following is a 640-amino-acid chain: DNA gyrase subunit B (640 aa).

The 115-residue stretch at 423–537 folds into the Toprim domain; that stretch reads AELYIVEGDS…NGNIYIAQPP (115 aa). Mg(2+) is bound by residues glutamate 429, aspartate 502, and aspartate 504.

It belongs to the type II topoisomerase GyrB family. As to quaternary structure, heterotetramer, composed of two GyrA and two GyrB chains. In the heterotetramer, GyrA contains the active site tyrosine that forms a transient covalent intermediate with DNA, while GyrB binds cofactors and catalyzes ATP hydrolysis. Mg(2+) is required as a cofactor. It depends on Mn(2+) as a cofactor. The cofactor is Ca(2+).

Its subcellular location is the cytoplasm. The enzyme catalyses ATP-dependent breakage, passage and rejoining of double-stranded DNA.. In terms of biological role, a type II topoisomerase that negatively supercoils closed circular double-stranded (ds) DNA in an ATP-dependent manner to modulate DNA topology and maintain chromosomes in an underwound state. Negative supercoiling favors strand separation, and DNA replication, transcription, recombination and repair, all of which involve strand separation. Also able to catalyze the interconversion of other topological isomers of dsDNA rings, including catenanes and knotted rings. Type II topoisomerases break and join 2 DNA strands simultaneously in an ATP-dependent manner. This chain is DNA gyrase subunit B, found in Spiroplasma citri.